Consider the following 773-residue polypeptide: Endonuclease MutS2 (773 aa).

ATP is bound at residue 334–341; it reads GANAGGKT. A Smr domain is found at 698 to 773; the sequence is VDLRGMRADV…GDGMTMVTLK (76 aa).

The protein belongs to the DNA mismatch repair MutS family. MutS2 subfamily. Homodimer. Binds to stalled ribosomes, contacting rRNA.

In terms of biological role, endonuclease that is involved in the suppression of homologous recombination and thus may have a key role in the control of bacterial genetic diversity. Functionally, acts as a ribosome collision sensor, splitting the ribosome into its 2 subunits. Detects stalled/collided 70S ribosomes which it binds and splits by an ATP-hydrolysis driven conformational change. Acts upstream of the ribosome quality control system (RQC), a ribosome-associated complex that mediates the extraction of incompletely synthesized nascent chains from stalled ribosomes and their subsequent degradation. Probably generates substrates for RQC. In Solidesulfovibrio magneticus (strain ATCC 700980 / DSM 13731 / RS-1) (Desulfovibrio magneticus), this protein is Endonuclease MutS2.